A 302-amino-acid polypeptide reads, in one-letter code: Catechol 1,2-dioxygenase (302 aa).

Fe cation is bound by residues Y164, Y198, H222, and H224.

The protein belongs to the intradiol ring-cleavage dioxygenase family. The cofactor is Fe(3+).

It carries out the reaction catechol + O2 = cis,cis-muconate + 2 H(+). It functions in the pathway aromatic compound metabolism; beta-ketoadipate pathway; 5-oxo-4,5-dihydro-2-furylacetate from catechol: step 1/3. The polypeptide is Catechol 1,2-dioxygenase (pheB) (Pseudomonas sp. (strain EST1001)).